Here is a 531-residue protein sequence, read N- to C-terminus: tRNA-2-methylthio-N(6)-dimethylallyladenosine synthase (531 aa).

Residues 1–26 form a disordered region; the sequence is MNEKQRLEQTGQIKTESHPADRKSAL. Residues 15–26 show a composition bias toward basic and acidic residues; it reads TESHPADRKSAL. An MTTase N-terminal domain is found at 80–198; it reads RKFYIRTYGC…LPYILHEAYM (119 aa). [4Fe-4S] cluster is bound by residues Cys-89, Cys-125, Cys-159, Cys-235, Cys-239, and Cys-242. The Radical SAM core domain occupies 221–451; it reads RKGKIKAWVN…NDLVQEIAAK (231 aa). A TRAM domain is found at 454–517; sequence KQYEGQVVEV…TWTLTGELVN (64 aa).

Belongs to the methylthiotransferase family. MiaB subfamily. Monomer. It depends on [4Fe-4S] cluster as a cofactor.

It is found in the cytoplasm. It catalyses the reaction N(6)-dimethylallyladenosine(37) in tRNA + (sulfur carrier)-SH + AH2 + 2 S-adenosyl-L-methionine = 2-methylsulfanyl-N(6)-dimethylallyladenosine(37) in tRNA + (sulfur carrier)-H + 5'-deoxyadenosine + L-methionine + A + S-adenosyl-L-homocysteine + 2 H(+). Catalyzes the methylthiolation of N6-(dimethylallyl)adenosine (i(6)A), leading to the formation of 2-methylthio-N6-(dimethylallyl)adenosine (ms(2)i(6)A) at position 37 in tRNAs that read codons beginning with uridine. The sequence is that of tRNA-2-methylthio-N(6)-dimethylallyladenosine synthase from Geobacillus kaustophilus (strain HTA426).